The following is a 392-amino-acid chain: Phosphoglycerate kinase (392 aa).

Substrate contacts are provided by residues 21–23 (DFN), R36, 59–62 (HLGR), R118, and R151. ATP contacts are provided by residues K201, G292, E323, and 349 to 352 (GGDS).

Belongs to the phosphoglycerate kinase family. As to quaternary structure, monomer.

It localises to the cytoplasm. The catalysed reaction is (2R)-3-phosphoglycerate + ATP = (2R)-3-phospho-glyceroyl phosphate + ADP. The protein operates within carbohydrate degradation; glycolysis; pyruvate from D-glyceraldehyde 3-phosphate: step 2/5. The chain is Phosphoglycerate kinase from Borrelia duttonii (strain Ly).